Consider the following 182-residue polypeptide: UPF0397 protein BCQ_2505 (182 aa).

Helical transmembrane passes span V9–I29, A40–I60, W71–I91, I114–V134, and I142–L162.

The protein belongs to the UPF0397 family.

The protein localises to the cell membrane. This Bacillus cereus (strain Q1) protein is UPF0397 protein BCQ_2505.